The sequence spans 338 residues: Phytanoyl-CoA dioxygenase, peroxisomal (338 aa).

The transit peptide at 1–30 directs the protein to the peroxisome; that stretch reads MDYTRAGARLQVLLGHLGRPSALQIVAHPV. Residues Lys-59 and Lys-108 each carry the N6-succinyllysine modification. Residues Lys-120, Met-157, 175–177, and Trp-193 contribute to the 2-oxoglutarate site; that span reads HQD. Fe cation is bound by residues His-175 and Asp-177. 2 positions are modified to N6-succinyllysine: Lys-231 and Lys-252. His-264 contacts Fe cation. 2-oxoglutarate is bound by residues Ser-266 and Arg-275.

The protein belongs to the PhyH family. Interacts specifically with FKBP52 and PHYHIP. The cofactor is Fe cation. It depends on L-ascorbate as a cofactor. ATP serves as cofactor. Requires Mg(2+) as cofactor.

The protein localises to the peroxisome. The catalysed reaction is phytanoyl-CoA + 2-oxoglutarate + O2 = 2-hydroxyphytanoyl-CoA + succinate + CO2. It catalyses the reaction 3-methylhexadecanoyl-CoA + 2-oxoglutarate + O2 = 2-hydroxy-3-methylhexadecanoyl-CoA + succinate + CO2. The enzyme catalyses hexadecanoyl-CoA + 2-oxoglutarate + O2 = 2-hydroxyhexadecanoyl-CoA + succinate + CO2. It carries out the reaction octanoyl-CoA + 2-oxoglutarate + O2 = 2-hydroxyoctanoyl-CoA + succinate + CO2. The catalysed reaction is decanoyl-CoA + 2-oxoglutarate + O2 = 2-hydroxydecanoyl-CoA + succinate + CO2. It catalyses the reaction 3-methylbutanoyl-CoA + 2-oxoglutarate + O2 = 2-hydroxy-3-methylbutanoyl-CoA + succinate + CO2. The enzyme catalyses heptadecanoyl-CoA + 2-oxoglutarate + O2 = 2-hydroxyheptadecanoyl-CoA + succinate + CO2. It carries out the reaction eicosanoyl-CoA + 2-oxoglutarate + O2 = 2-hydroxyeicosanoyl-CoA + succinate + CO2. The catalysed reaction is octadecanoyl-CoA + 2-oxoglutarate + O2 = 2-hydroxyoctadecanoyl-CoA + succinate + CO2. It catalyses the reaction dodecanoyl-CoA + 2-oxoglutarate + O2 = 2-hydroxydodecanoyl-CoA + succinate + CO2. The enzyme catalyses tetradecanoyl-CoA + 2-oxoglutarate + O2 = 2-hydroxytetradecanoyl-CoA + succinate + CO2. It carries out the reaction hexanoyl-CoA + 2-oxoglutarate + O2 = 2-hydroxyhexanoyl-CoA + succinate + CO2. The catalysed reaction is butanoyl-CoA + 2-oxoglutarate + O2 = 2-hydroxybutanoyl-CoA + succinate + CO2. It catalyses the reaction 3-methylnonanoyl-CoA + 2-oxoglutarate + O2 = 2-hydroxy-3-methylnonanoyl-CoA + succinate + CO2. The enzyme catalyses 3-methylundecanoyl-CoA + 2-oxoglutarate + O2 = 2-hydroxy-3-methylundecanoyl-CoA + succinate + CO2. It carries out the reaction 3-methyldodecanoyl-CoA + 2-oxoglutarate + O2 = 2-hydroxy-3-methyldodecanoyl-CoA + succinate + CO2. It participates in lipid metabolism; fatty acid metabolism. Catalyzes the 2-hydroxylation of racemic phytanoyl-CoA and the isomers of 3-methylhexadecanoyl-CoA. Shows activity also towards a variety of other mono-branched 3-methylacyl-CoA esters (with a chain length of at least seven carbon atoms) and straight-chain acyl-CoA esters (with a chain length longer than four carbon atoms). Does not hydroxylate long and very long straight chain acyl-CoAs or 2-methyl-and 4-methyl-branched acyl-CoAs. The chain is Phytanoyl-CoA dioxygenase, peroxisomal (Phyh) from Rattus norvegicus (Rat).